A 264-amino-acid polypeptide reads, in one-letter code: Tryptophan synthase alpha chain (264 aa).

Residues glutamate 49 and aspartate 60 each act as proton acceptor in the active site.

This sequence belongs to the TrpA family. In terms of assembly, tetramer of two alpha and two beta chains.

It catalyses the reaction (1S,2R)-1-C-(indol-3-yl)glycerol 3-phosphate + L-serine = D-glyceraldehyde 3-phosphate + L-tryptophan + H2O. It participates in amino-acid biosynthesis; L-tryptophan biosynthesis; L-tryptophan from chorismate: step 5/5. The alpha subunit is responsible for the aldol cleavage of indoleglycerol phosphate to indole and glyceraldehyde 3-phosphate. The polypeptide is Tryptophan synthase alpha chain (Geotalea daltonii (strain DSM 22248 / JCM 15807 / FRC-32) (Geobacter daltonii)).